Consider the following 359-residue polypeptide: Nicotinate-nucleotide--dimethylbenzimidazole phosphoribosyltransferase (359 aa).

The active-site Proton acceptor is the Glu-318.

The protein belongs to the CobT family. In terms of assembly, homodimer.

It catalyses the reaction 5,6-dimethylbenzimidazole + nicotinate beta-D-ribonucleotide = alpha-ribazole 5'-phosphate + nicotinate + H(+). It participates in nucleoside biosynthesis; alpha-ribazole biosynthesis; alpha-ribazole from 5,6-dimethylbenzimidazole: step 1/2. Its function is as follows. Catalyzes the synthesis of alpha-ribazole-5'-phosphate from nicotinate mononucleotide (NAMN) and 5,6-dimethylbenzimidazole (DMB). This Shigella flexneri serotype 5b (strain 8401) protein is Nicotinate-nucleotide--dimethylbenzimidazole phosphoribosyltransferase.